The sequence spans 410 residues: Diguanylate cyclase DgcM (410 aa).

PAS domains follow at residues T3–D70 and G129–G198. Positions G199–H251 constitute a PAC domain. The 128-residue stretch at Q283 to A410 folds into the GGDEF domain. D291 provides a ligand contact to Mg(2+). N299, H304, and D308 together coordinate substrate. E334 contacts Mg(2+). E334 acts as the Proton acceptor in catalysis.

Requires Mg(2+) as cofactor.

The catalysed reaction is 2 GTP = 3',3'-c-di-GMP + 2 diphosphate. It functions in the pathway purine metabolism; 3',5'-cyclic di-GMP biosynthesis. Its function is as follows. Part of a signaling cascade that regulates curli biosynthesis. The cascade is composed of two cyclic-di-GMP (c-di-GMP) control modules, in which c-di-GMP controlled by the DgcE/PdeH pair (module I) regulates the activity of the DgcM/PdeR pair (module II), which in turn regulates activity of the transcription factor MlrA and expression of the master biofilm regulator csgD. The sequence is that of Diguanylate cyclase DgcM from Escherichia coli O157:H7.